Here is a 578-residue protein sequence, read N- to C-terminus: Arginine--tRNA ligase (578 aa).

The 'HIGH' region signature appears at 127–137; it reads PNLAKEMHVGH.

It belongs to the class-I aminoacyl-tRNA synthetase family. As to quaternary structure, monomer.

The protein resides in the cytoplasm. It carries out the reaction tRNA(Arg) + L-arginine + ATP = L-arginyl-tRNA(Arg) + AMP + diphosphate. In Pseudomonas fluorescens (strain Pf0-1), this protein is Arginine--tRNA ligase.